The sequence spans 361 residues: Queuine tRNA-ribosyltransferase (361 aa).

The active-site Proton acceptor is the aspartate 92. Substrate is bound by residues 92-96 (DSGGF), aspartate 146, glutamine 189, and glycine 216. The segment at 247 to 253 (GVGKPAD) is RNA binding. Aspartate 266 serves as the catalytic Nucleophile. Residues 271 to 275 (TRSGR) are RNA binding; important for wobble base 34 recognition. Residues cysteine 304, cysteine 306, cysteine 309, and histidine 335 each coordinate Zn(2+).

It belongs to the queuine tRNA-ribosyltransferase family. As to quaternary structure, homodimer. Within each dimer, one monomer is responsible for RNA recognition and catalysis, while the other monomer binds to the replacement base PreQ1. It depends on Zn(2+) as a cofactor.

It catalyses the reaction 7-aminomethyl-7-carbaguanine + guanosine(34) in tRNA = 7-aminomethyl-7-carbaguanosine(34) in tRNA + guanine. Its pathway is tRNA modification; tRNA-queuosine biosynthesis. In terms of biological role, catalyzes the base-exchange of a guanine (G) residue with the queuine precursor 7-aminomethyl-7-deazaguanine (PreQ1) at position 34 (anticodon wobble position) in tRNAs with GU(N) anticodons (tRNA-Asp, -Asn, -His and -Tyr). Catalysis occurs through a double-displacement mechanism. The nucleophile active site attacks the C1' of nucleotide 34 to detach the guanine base from the RNA, forming a covalent enzyme-RNA intermediate. The proton acceptor active site deprotonates the incoming PreQ1, allowing a nucleophilic attack on the C1' of the ribose to form the product. After dissociation, two additional enzymatic reactions on the tRNA convert PreQ1 to queuine (Q), resulting in the hypermodified nucleoside queuosine (7-(((4,5-cis-dihydroxy-2-cyclopenten-1-yl)amino)methyl)-7-deazaguanosine). The protein is Queuine tRNA-ribosyltransferase of Rickettsia peacockii (strain Rustic).